The following is a 154-amino-acid chain: 6,7-dimethyl-8-ribityllumazine synthase (154 aa).

5-amino-6-(D-ribitylamino)uracil-binding positions include phenylalanine 22, 56 to 58, and 81 to 83; these read SFE and VLI. Residue 86–87 coordinates (2S)-2-hydroxy-3-oxobutyl phosphate; sequence ET. Histidine 89 (proton donor) is an active-site residue. Phenylalanine 114 lines the 5-amino-6-(D-ribitylamino)uracil pocket. A (2S)-2-hydroxy-3-oxobutyl phosphate-binding site is contributed by arginine 128.

The protein belongs to the DMRL synthase family.

It catalyses the reaction (2S)-2-hydroxy-3-oxobutyl phosphate + 5-amino-6-(D-ribitylamino)uracil = 6,7-dimethyl-8-(1-D-ribityl)lumazine + phosphate + 2 H2O + H(+). Its pathway is cofactor biosynthesis; riboflavin biosynthesis; riboflavin from 2-hydroxy-3-oxobutyl phosphate and 5-amino-6-(D-ribitylamino)uracil: step 1/2. In terms of biological role, catalyzes the formation of 6,7-dimethyl-8-ribityllumazine by condensation of 5-amino-6-(D-ribitylamino)uracil with 3,4-dihydroxy-2-butanone 4-phosphate. This is the penultimate step in the biosynthesis of riboflavin. In Chlamydia caviae (strain ATCC VR-813 / DSM 19441 / 03DC25 / GPIC) (Chlamydophila caviae), this protein is 6,7-dimethyl-8-ribityllumazine synthase.